A 101-amino-acid polypeptide reads, in one-letter code: DNA-binding protein Fis (101 aa).

Residues glutamine 77 to lysine 96 constitute a DNA-binding region (H-T-H motif).

The protein belongs to the transcriptional regulatory Fis family. In terms of assembly, homodimer.

Functionally, activates ribosomal RNA transcription. Plays a direct role in upstream activation of rRNA promoters. The protein is DNA-binding protein Fis of Shewanella baltica (strain OS223).